The sequence spans 336 residues: Dihydroorotate dehydrogenase (quinone) (336 aa).

Residues 62–66 (AGLDK) and threonine 86 contribute to the FMN site. Lysine 66 serves as a coordination point for substrate. Substrate is bound at residue 111–115 (NRMGF). FMN contacts are provided by asparagine 139 and asparagine 172. A substrate-binding site is contributed by asparagine 172. The active-site Nucleophile is serine 175. Asparagine 177 contacts substrate. Positions 217 and 245 each coordinate FMN. Position 246 to 247 (246 to 247 (NT)) interacts with substrate. Residues glycine 268, glycine 297, and 318 to 319 (YS) each bind FMN.

It belongs to the dihydroorotate dehydrogenase family. Type 2 subfamily. In terms of assembly, monomer. FMN is required as a cofactor.

The protein localises to the cell membrane. The enzyme catalyses (S)-dihydroorotate + a quinone = orotate + a quinol. The protein operates within pyrimidine metabolism; UMP biosynthesis via de novo pathway; orotate from (S)-dihydroorotate (quinone route): step 1/1. Its function is as follows. Catalyzes the conversion of dihydroorotate to orotate with quinone as electron acceptor. This chain is Dihydroorotate dehydrogenase (quinone), found in Escherichia coli (strain UTI89 / UPEC).